The following is a 433-amino-acid chain: Enolase (433 aa).

(2R)-2-phosphoglycerate is bound at residue Gln167. The active-site Proton donor is Glu209. Mg(2+) contacts are provided by Asp246, Glu291, and Asp318. Residues Lys343, Arg372, Ser373, and Lys394 each contribute to the (2R)-2-phosphoglycerate site. Residue Lys343 is the Proton acceptor of the active site.

This sequence belongs to the enolase family. In terms of assembly, component of the RNA degradosome, a multiprotein complex involved in RNA processing and mRNA degradation. Mg(2+) serves as cofactor.

The protein resides in the cytoplasm. It localises to the secreted. It is found in the cell surface. The catalysed reaction is (2R)-2-phosphoglycerate = phosphoenolpyruvate + H2O. The protein operates within carbohydrate degradation; glycolysis; pyruvate from D-glyceraldehyde 3-phosphate: step 4/5. Its function is as follows. Catalyzes the reversible conversion of 2-phosphoglycerate (2-PG) into phosphoenolpyruvate (PEP). It is essential for the degradation of carbohydrates via glycolysis. The chain is Enolase from Shewanella frigidimarina (strain NCIMB 400).